A 171-amino-acid chain; its full sequence is Nicotinamide-nucleotide adenylyltransferase (171 aa).

This sequence belongs to the archaeal NMN adenylyltransferase family.

The protein resides in the cytoplasm. The catalysed reaction is beta-nicotinamide D-ribonucleotide + ATP + H(+) = diphosphate + NAD(+). It participates in cofactor biosynthesis; NAD(+) biosynthesis; NAD(+) from nicotinamide D-ribonucleotide: step 1/1. The sequence is that of Nicotinamide-nucleotide adenylyltransferase from Methanococcus maripaludis (strain DSM 14266 / JCM 13030 / NBRC 101832 / S2 / LL).